Reading from the N-terminus, the 588-residue chain is Transcription factor 7-like 1 (588 aa).

Gly residues predominate over residues 1–31 (MPQLGGGGGGGGGGSGGGGGSSAGAAGGGDD). Residues 1–74 (MPQLGGGGGG…VKSSLVNESE (74 aa)) form a CTNNB1-binding region. Disordered regions lie at residues 1–101 (MPQL…PRDY), 203–234 (SPGS…SPYY), and 409–506 (LYPT…LSLT). The segment covering 67-81 (SSLVNESENQSSSSD) has biased composition (low complexity). Positions 83 to 101 (EAERRPQPVRDTFQKPRDY) are enriched in basic and acidic residues. A DNA-binding region (HMG box) is located at residues 346-414 (VKKPLNAFML…LHSQLYPTWS (69 aa)). Positions 421–427 (KKKKRKR) match the Nuclear localization signal motif. Low complexity-rich tracts occupy residues 431–441 (LSQTQSQQQVQ) and 478–497 (SPAT…ATHS).

It belongs to the TCF/LEF family. In terms of assembly, binds the armadillo repeat of CTNNB1 and forms a stable complex. Interacts with DAZAP2. Detected in hair follicles and skin keratinocytes, and at lower levels in stomach epithelium.

Its subcellular location is the nucleus. In terms of biological role, participates in the Wnt signaling pathway. Binds to DNA and acts as a repressor in the absence of CTNNB1, and as an activator in its presence. Necessary for the terminal differentiation of epidermal cells, the formation of keratohyalin granules and the development of the barrier function of the epidermis. Down-regulates NQO1, leading to increased mitomycin c resistance. This Homo sapiens (Human) protein is Transcription factor 7-like 1 (TCF7L1).